A 301-amino-acid polypeptide reads, in one-letter code: Glycine--tRNA ligase alpha subunit (301 aa).

Belongs to the class-II aminoacyl-tRNA synthetase family. As to quaternary structure, tetramer of two alpha and two beta subunits.

It is found in the cytoplasm. It carries out the reaction tRNA(Gly) + glycine + ATP = glycyl-tRNA(Gly) + AMP + diphosphate. The protein is Glycine--tRNA ligase alpha subunit of Variovorax paradoxus (strain S110).